A 155-amino-acid chain; its full sequence is Snaclec bothrojaracin subunit alpha (155 aa).

Residues M1 to A23 form the signal peptide. Disulfide bonds link C25–C36, C53–C150, and C125–C142. The 120-residue stretch at H32–K151 folds into the C-type lectin domain.

Belongs to the snaclec family. In terms of assembly, heterodimer of subunits alpha and beta; disulfide-linked. In terms of tissue distribution, expressed by the venom gland.

The protein localises to the secreted. This potent antithrombotic agent acts in a calcium-independent manner. Exerts its anticoagulant effect by two distinct mechanisms. It binds to activated thrombin through exosite 1, blocking fibrinogen clotting, platelet activation, factor V activation and other effects, and it interacts with prothrombin (F2), decreasing its proteolytic activation -especially in the presence of factor Va. In vivo, intravenous injection before thrombosis induction causes a significant decrease in thrombus weight. Furthermore, BJC shows a prolonged effect by remaining in the plasma bound to prothrombin for at least 12 hours. The sequence is that of Snaclec bothrojaracin subunit alpha from Bothrops jararaca (Jararaca).